The primary structure comprises 476 residues: Serine/threonine-protein kinase PknF (476 aa).

Phosphothreonine; by autocatalysis is present on residues threonine 8 and threonine 13. The region spanning 12–279 (FTIVRQLGSG…FARALGHRLG (268 aa)) is the Protein kinase domain. Residues 18–26 (LGSGGMGEV) and lysine 41 contribute to the ATP site. The active-site Proton acceptor is aspartate 137. A phosphothreonine; by autocatalysis mark is found at threonine 173, threonine 175, and threonine 287. Phosphoserine; by autocatalysis is present on serine 290. The disordered stretch occupies residues 332–376 (ADDERAAQPARTRTTTSAGTTTSVAPASTTRPAPTTPTTTGAADT). Positions 338–376 (AQPARTRTTTSAGTTTSVAPASTTRPAPTTPTTTGAADT) are enriched in low complexity.

Belongs to the protein kinase superfamily. Ser/Thr protein kinase family. In terms of processing, dephosphorylated by PstP.

It catalyses the reaction L-seryl-[protein] + ATP = O-phospho-L-seryl-[protein] + ADP + H(+). The catalysed reaction is L-threonyl-[protein] + ATP = O-phospho-L-threonyl-[protein] + ADP + H(+). The protein is Serine/threonine-protein kinase PknF (pknF) of Mycobacterium bovis (strain ATCC BAA-935 / AF2122/97).